The sequence spans 138 residues: Ribosome-binding factor A (138 aa).

A disordered region spans residues 119–138 (DMDEKKNSDEKRDSDEKLED).

The protein belongs to the RbfA family. In terms of assembly, monomer. Binds 30S ribosomal subunits, but not 50S ribosomal subunits or 70S ribosomes.

Its subcellular location is the cytoplasm. In terms of biological role, one of several proteins that assist in the late maturation steps of the functional core of the 30S ribosomal subunit. Associates with free 30S ribosomal subunits (but not with 30S subunits that are part of 70S ribosomes or polysomes). Required for efficient processing of 16S rRNA. May interact with the 5'-terminal helix region of 16S rRNA. This chain is Ribosome-binding factor A, found in Alkaliphilus metalliredigens (strain QYMF).